The following is a 387-amino-acid chain: Putative purine permease 15 (387 aa).

10 consecutive transmembrane segments (helical) span residues 44–64, 84–104, 122–142, 150–169, 179–199, 210–230, 252–272, 306–326, 329–349, and 354–374; these read WVTIIICTILAVTGQCIARLL, TLLQVVGFPILLLPFLLHFLI, LAITYSILCIYMFCQAFFSDV, VFTLTYTTQLLFTLIFSKYY, FISLILAVLAGAFTLYTFSAG, YGIINVAFGAAIFFSLLLCII, FVVVLEMIIFLSLVVTIILVA, VAWQIYWVGIVGLVFAVSAVF, VISVCTWPIVSLLVAFLYNTH, and VFRGIALGAAALSVSCYIYII.

It belongs to the purine permeases (TC 2.A.7.14) family.

The protein localises to the membrane. The polypeptide is Putative purine permease 15 (PUP15) (Arabidopsis thaliana (Mouse-ear cress)).